A 254-amino-acid polypeptide reads, in one-letter code: Mediator of RNA polymerase II transcription subunit 8 (254 aa).

A coiled-coil region spans residues 154 to 190 (LEEREMGIQNVVTGLRRQLEDDERDEDEDEDDEEEEE). The disordered stretch occupies residues 167–234 (GLRRQLEDDE…SQQVQKGAGP (68 aa)). Residues 173-199 (EDDERDEDEDEDDEEEEEGEGEDEEME) show a composition bias toward acidic residues.

This sequence belongs to the Mediator complex subunit 8 family. Component of the Mediator complex.

The protein localises to the nucleus. In terms of biological role, component of the Mediator complex, a coactivator involved in the regulated transcription of nearly all RNA polymerase II-dependent genes. Mediator functions as a bridge to convey information from gene-specific regulatory proteins to the basal RNA polymerase II transcription machinery. Mediator is recruited to promoters by direct interactions with regulatory proteins and serves as a scaffold for the assembly of a functional preinitiation complex with RNA polymerase II and the general transcription factors. This is Mediator of RNA polymerase II transcription subunit 8 (med8) from Aspergillus clavatus (strain ATCC 1007 / CBS 513.65 / DSM 816 / NCTC 3887 / NRRL 1 / QM 1276 / 107).